The primary structure comprises 84 residues: CDC42 small effector protein 2 (84 aa).

Residues cysteine 10 and cysteine 11 are each lipidated (S-palmitoyl cysteine). A CRIB domain is found at 29 to 42; sequence IGEPTNFVHTAHVG. Residues serine 43 and serine 52 each carry the phosphoserine modification.

Belongs to the CDC42SE/SPEC family. In terms of assembly, interacts with CDC42 (in GTP-bound form). Interacts weakly with RAC1 and not at all with RHOA. In terms of tissue distribution, widely expressed. Expressed at higher level in T-lymphocytes. Highly expressed in CCRF-CEM T-lymphocytes, Jurkat T-lymphocytes, and Raji B-lymphocytes compared (at protein level).

The protein resides in the cytoplasm. The protein localises to the cytoskeleton. Its subcellular location is the cell membrane. It localises to the cell projection. It is found in the phagocytic cup. Probably involved in the organization of the actin cytoskeleton by acting downstream of CDC42, inducing actin filament assembly. Alters CDC42-induced cell shape changes. In activated T-cells, may play a role in CDC42-mediated F-actin accumulation at the immunological synapse. May play a role in early contractile events in phagocytosis in macrophages. The sequence is that of CDC42 small effector protein 2 (CDC42SE2) from Homo sapiens (Human).